We begin with the raw amino-acid sequence, 762 residues long: Probable inorganic carbon transporter subunit DabA (762 aa).

Zn(2+)-binding residues include Cys-279, Asp-281, His-461, and Cys-476.

The protein belongs to the inorganic carbon transporter (TC 9.A.2) DabA family. In terms of assembly, forms a complex with DabB. Zn(2+) serves as cofactor.

Its subcellular location is the cell inner membrane. In terms of biological role, part of an energy-coupled inorganic carbon pump. This chain is Probable inorganic carbon transporter subunit DabA, found in Legionella pneumophila subsp. pneumophila (strain Philadelphia 1 / ATCC 33152 / DSM 7513).